The following is a 211-amino-acid chain: Claudin-13 (211 aa).

The Cytoplasmic segment spans residues 1-8 (MVVSKQEA). The chain crosses the membrane as a helical span at residues 9-29 (ISFSVTSLGWVGAIVSCVLPV). Topologically, residues 30–80 (WRVTFPDDETDPDATIWEGLWHICQVRENRWIQCTLYDTRILVAQDIKVSR) are extracellular. The helical transmembrane segment at 81-101 (VFMVICTIGTWLGLLLCVLGD) threads the bilayer. The Cytoplasmic segment spans residues 102 to 118 (WRINCFMNFTIEENLLK). Residues 119 to 139 (VAGGMFLSVGLLMLVPLSWVT) form a helical membrane-spanning segment. Over 140-165 (HNIIHGFFNPLLGFSKKVQMGSSLSL) the chain is Extracellular. The chain crosses the membrane as a helical span at residues 166–186 (AWTSSLLLLLGGILLCVNIPV). Residues 187-211 (CRDFPRCIETPSARPSGANNDTLDV) lie on the Cytoplasmic side of the membrane.

It belongs to the claudin family.

The protein localises to the cell junction. The protein resides in the tight junction. Its subcellular location is the cell membrane. Its function is as follows. Plays a major role in tight junction-specific obliteration of the intercellular space, through calcium-independent cell-adhesion activity. This Mus musculus (Mouse) protein is Claudin-13 (Cldn13).